The sequence spans 715 residues: MTTTSAFMLNVRLDNVAVVAIDVPGEKVNTLKAEFATQVRAILKQIRENKALQGVVFISAKADNFIAGADINMIGHCQNAQEAETLARQGQQLMAEIQALPVPVIAAIHGACLGGGLEMALACHRRICTDDVKTVLGLPEVQLGLLPGSGGTQRLPRLVGVSTALDMILTGKQLRARQALKAGLVDDVVPQTILLEAAVELAKKERLAQRTLPVRERILAGPLGRALLFRLVRKKTAQKTQGNYPATERIIDVIETGLAQGSSSGYDAEARAFGELAMTPQSQALRAIFFASTEVKKDPGSDAPPGPLNSVGILGGGLMGGGIAWVTACKGGLPVRIKDINTQGINHALKYSWDLLETKVRRRHIKASERDKQLALISGSTDYRGFSHRDLVIEAVFEDLPLKQQMVAEVEQNCAAHTIFASNTSSLPIGDIAANAARPEQVIGLHFFSPVEKMPLVEVIPHASTSAQTIATTVKLAKKQGKTPIVVSDKAGFYVNRILAPYINEAIRMLTEGERVEHIDAALVKFGFPVGPIQLLDEVGIDTGTKIIPVLEAAYGERFSAPANVVASILNDDRKGRKNGRGFYLYGEKGRKSKKQVDPAIYKLIGVQGQSRLSAQQVAERCVMLMLNEAARCFDEKVIRSARDGDIGAVFGIGFPPFLGGPFRYMDALGPGEMVATLQRLAALYGPRYAPCEQLVRMAERREHFWTNGETDQGN.

Residues 1-190 (MTTTSAFMLN…KAGLVDDVVP (190 aa)) form an enoyl-CoA hydratase region. A 3-hydroxyacyl-CoA dehydrogenase region spans residues 306-714 (GPLNSVGILG…FWTNGETDQG (409 aa)).

In the N-terminal section; belongs to the enoyl-CoA hydratase/isomerase family. This sequence in the central section; belongs to the 3-hydroxyacyl-CoA dehydrogenase family. Heterotetramer of two alpha chains (FadJ) and two beta chains (FadI).

The protein localises to the cytoplasm. It catalyses the reaction a (3S)-3-hydroxyacyl-CoA = a (2E)-enoyl-CoA + H2O. The enzyme catalyses a 4-saturated-(3S)-3-hydroxyacyl-CoA = a (3E)-enoyl-CoA + H2O. The catalysed reaction is a (3S)-3-hydroxyacyl-CoA + NAD(+) = a 3-oxoacyl-CoA + NADH + H(+). It carries out the reaction (3S)-3-hydroxybutanoyl-CoA = (3R)-3-hydroxybutanoyl-CoA. It participates in lipid metabolism; fatty acid beta-oxidation. In terms of biological role, catalyzes the formation of a hydroxyacyl-CoA by addition of water on enoyl-CoA. Also exhibits 3-hydroxyacyl-CoA epimerase and 3-hydroxyacyl-CoA dehydrogenase activities. This is Fatty acid oxidation complex subunit alpha from Salmonella typhimurium (strain LT2 / SGSC1412 / ATCC 700720).